The following is a 198-amino-acid chain: Na(+)-translocating NADH-quinone reductase subunit E (198 aa).

Transmembrane regions (helical) follow at residues 11-31, 35-55, 77-97, 110-130, 140-160, and 176-196; these read SVFIENMALSFFLGMCTFLAV, VSTSFGLGIAVIVVLGIAVPV, FLNFITFIGVIAALVQILEMF, GIFLPLITVNCAIFGGVSFMV, VVYGIGAGTGWMLAIVALAGL, and LGITFITVGLMALGFMSFSGI.

It belongs to the NqrDE/RnfAE family. Composed of six subunits; NqrA, NqrB, NqrC, NqrD, NqrE and NqrF.

Its subcellular location is the cell inner membrane. It carries out the reaction a ubiquinone + n Na(+)(in) + NADH + H(+) = a ubiquinol + n Na(+)(out) + NAD(+). In terms of biological role, NQR complex catalyzes the reduction of ubiquinone-1 to ubiquinol by two successive reactions, coupled with the transport of Na(+) ions from the cytoplasm to the periplasm. NqrA to NqrE are probably involved in the second step, the conversion of ubisemiquinone to ubiquinol. This chain is Na(+)-translocating NADH-quinone reductase subunit E, found in Actinobacillus succinogenes (strain ATCC 55618 / DSM 22257 / CCUG 43843 / 130Z).